We begin with the raw amino-acid sequence, 120 residues long: Dynein 11 kDa light chain, flagellar outer arm (120 aa).

This sequence belongs to the dynein light chain family. Consists of at least 3 heavy chains (alpha, beta and gamma), 2 intermediate chains and 8 light chains.

The protein resides in the cytoplasm. It localises to the cytoskeleton. It is found in the flagellum axoneme. The chain is Dynein 11 kDa light chain, flagellar outer arm from Chlamydomonas reinhardtii (Chlamydomonas smithii).